A 224-amino-acid chain; its full sequence is UPF0758 protein Hhal_2301 (224 aa).

Residues 102 to 224 form the MPN domain; that stretch reads TLSSPAQTRT…PVSLAERGVL (123 aa). Zn(2+) is bound by residues His-173, His-175, and Asp-186. A JAMM motif motif is present at residues 173–186; the sequence is HNHPSGITEPSAAD.

It belongs to the UPF0758 family.

The sequence is that of UPF0758 protein Hhal_2301 from Halorhodospira halophila (strain DSM 244 / SL1) (Ectothiorhodospira halophila (strain DSM 244 / SL1)).